The sequence spans 395 residues: MSLSIGMVAGEPSGDLLAGRIIGGLRAGAPDVHCAGIGGPQMQAQGFEAWHPMHALTVFGYIDALKRIPSLLSIYGQTKQRMLAERPAAFVGIDAPDFNLRLELQLRQAGIPTVHFVGPSIWAWRYERIHKIRAAVSHMLVLFPFEEEIYQKEGIPVTYVGHPLAGVIPMRPDRAAARLRLNLDVGERVLAILPGSRSSEIRTLAPRFLQAAQLLQARDPALCCVVPMVNPQRRAEFEQILAQYPVQGLRCITAEDVQGNGATPVAWSVMEAADAVLVASGTATLETALYKRPMVISYVLTPWMRRIMAWKSGQQRPYLPWVGLPNVLLKDFAVPELLQDDATPEKLAEAAWTALTDKDNAARIEARFTAMHEELLRDTPALAAKAILEVAHGAG.

This sequence belongs to the LpxB family.

The enzyme catalyses a lipid X + a UDP-2-N,3-O-bis[(3R)-3-hydroxyacyl]-alpha-D-glucosamine = a lipid A disaccharide + UDP + H(+). It functions in the pathway bacterial outer membrane biogenesis; LPS lipid A biosynthesis. Functionally, condensation of UDP-2,3-diacylglucosamine and 2,3-diacylglucosamine-1-phosphate to form lipid A disaccharide, a precursor of lipid A, a phosphorylated glycolipid that anchors the lipopolysaccharide to the outer membrane of the cell. The sequence is that of Lipid-A-disaccharide synthase from Bordetella avium (strain 197N).